Consider the following 413-residue polypeptide: Lipoyl synthase, mitochondrial (413 aa).

The N-terminal 33 residues, 1-33, are a transit peptide targeting the mitochondrion; that stretch reads MAAATNRFRALYSSSRVATPQAGSASYLSYRGY. Residues C133, C138, C144, C164, C168, C171, and S379 each contribute to the [4Fe-4S] cluster site. Residues 147–368 enclose the Radical SAM core domain; sequence GGDKAAATAT…RQRALDMGFL (222 aa).

Belongs to the radical SAM superfamily. Lipoyl synthase family. Requires [4Fe-4S] cluster as cofactor.

The protein resides in the mitochondrion. It catalyses the reaction [[Fe-S] cluster scaffold protein carrying a second [4Fe-4S](2+) cluster] + N(6)-octanoyl-L-lysyl-[protein] + 2 oxidized [2Fe-2S]-[ferredoxin] + 2 S-adenosyl-L-methionine + 4 H(+) = [[Fe-S] cluster scaffold protein] + N(6)-[(R)-dihydrolipoyl]-L-lysyl-[protein] + 4 Fe(3+) + 2 hydrogen sulfide + 2 5'-deoxyadenosine + 2 L-methionine + 2 reduced [2Fe-2S]-[ferredoxin]. It participates in protein modification; protein lipoylation via endogenous pathway; protein N(6)-(lipoyl)lysine from octanoyl-[acyl-carrier-protein]: step 2/2. Catalyzes the radical-mediated insertion of two sulfur atoms into the C-6 and C-8 positions of the octanoyl moiety bound to the lipoyl domains of lipoate-dependent enzymes, thereby converting the octanoylated domains into lipoylated derivatives. This is Lipoyl synthase, mitochondrial from Emericella nidulans (strain FGSC A4 / ATCC 38163 / CBS 112.46 / NRRL 194 / M139) (Aspergillus nidulans).